The following is a 247-amino-acid chain: MLKATIDAEIFRESIDAIAALVTECRLHTAEDQIRTRSVDTANVAMVSLELQSTAFNSFSATAGELGLDIAKMKNIIGMMGKGDALTLTLLDEERKLELSFGGYRYSISLLDVNTIRKDPNPPGIDLPGKAVVPGDALNNAIKAAAVISDKIALGIDPDAMTFYMEAEGDTDHIKLALGEDELVALSPVQARSLFSIDYLKDMGRVMARADKVEVYLGIDHPVRFVFDIADGNGRVEYLLAPRIEAD.

The protein belongs to the PCNA family. As to quaternary structure, homotrimer. The subunits circularize to form a toroid; DNA passes through its center. Replication factor C (RFC) is required to load the toroid on the DNA.

Its function is as follows. Sliding clamp subunit that acts as a moving platform for DNA processing. Responsible for tethering the catalytic subunit of DNA polymerase and other proteins to DNA during high-speed replication. The chain is DNA polymerase sliding clamp from Methanoculleus marisnigri (strain ATCC 35101 / DSM 1498 / JR1).